A 359-amino-acid polypeptide reads, in one-letter code: Phospho-N-acetylmuramoyl-pentapeptide-transferase (359 aa).

Transmembrane regions (helical) follow at residues 3-23 (QIMI…PALI), 55-75 (VAIL…GLAF), 80-100 (ITAS…VGFL), 117-137 (TAKT…VLQF), 156-176 (IATV…VVSA), 187-207 (LDGL…LITF), 231-251 (LALI…WNAA), 255-275 (IFMG…LSVT), 280-300 (ILAV…VLQI), and 334-354 (FWLL…GEWL).

The protein belongs to the glycosyltransferase 4 family. MraY subfamily. Requires Mg(2+) as cofactor.

The protein resides in the cell membrane. The catalysed reaction is UDP-N-acetyl-alpha-D-muramoyl-L-alanyl-gamma-D-glutamyl-meso-2,6-diaminopimeloyl-D-alanyl-D-alanine + di-trans,octa-cis-undecaprenyl phosphate = di-trans,octa-cis-undecaprenyl diphospho-N-acetyl-alpha-D-muramoyl-L-alanyl-D-glutamyl-meso-2,6-diaminopimeloyl-D-alanyl-D-alanine + UMP. The protein operates within cell wall biogenesis; peptidoglycan biosynthesis. In terms of biological role, catalyzes the initial step of the lipid cycle reactions in the biosynthesis of the cell wall peptidoglycan: transfers peptidoglycan precursor phospho-MurNAc-pentapeptide from UDP-MurNAc-pentapeptide onto the lipid carrier undecaprenyl phosphate, yielding undecaprenyl-pyrophosphoryl-MurNAc-pentapeptide, known as lipid I. The chain is Phospho-N-acetylmuramoyl-pentapeptide-transferase from Mycobacterium ulcerans (strain Agy99).